A 1066-amino-acid polypeptide reads, in one-letter code: MKFGKQIQKRQLEVPEYAASFVNYKALKKLIKKLSATPILPPQTDLRRAPGEPLDTQSALQANKATFFFQIDRELDKVNACYVQKEAELKIRLKTLLDKKKALRSRSGGTSRRSTKFTTLQEGFQQFVNDLNKLQQFVEINGTAFSKILKKWDKTAKSKTKELYLSRVVEKRPAFNPTVISELSDQATTSLQELGAWADGDNVSFETRPDHDHVVSTQHLLGTDEGDADTLLLDTVLSGNIDSLKDMLDRMKATAAPDGSADVSLAERVTRTFLASINEGSLEALKVLLDTGLVDIQSWDDINERNCLHQAAIYGNSFVLEYGLSKGVDAERTDAYGRVPLHYASMHGRLDMIDALLNASPKTINLIDHDNFTPLVHSIVRNHLECVGRLLERSARIDPVSDTDHVPLNLACQHGSVAIVELLLKHGAKILADAEGLYPQHLVARSGQTPEILVLLKQYGADLDQIDKLYGWTPLVHAASEGNVPCLQALLETGADPNILDEKDLPAMYYAAWEGHLECMKLLTPAKKEKAASELPPIHIGGALPPMASSTAPMPMSLDAIDPIPALELPPPIIPLRRYGHNFLDTKTVVQISFEEDSEQPLLFFQDGKYPAARLTISSKSSDLIPKNIILPFQEDTRVASFQIDNLESFTLDFEVFPTYGAKVIAKTVALPNIFRALLSSSGKCCLPLFDPRLRAIGQISFHVQIIKPFSGTPLEITDFETYWKATSQFDTNTSTFVTGSSLSGDFVQIYVQHTKDGVPVLWPRWTINCGGIDVPVSTLTLAQFQTVTAAARNRINLSELSTYTLDQIADVHRILANIGITLHEALFLLPKGMHVNIQVLYPTADEKAEAKSSTAADDVNEFADAILSVVFDHARAQRAERPDSVRSVVFSSYNPTLCTALNWKQPNFPVFLCNDMGREDRKQQQQGSCSKGDGDEDMGGTTAASRREAADERTLQSDGRRTSSIKDVVRTATSNNLMGLICCSRLLDMVPALVDAIKSHGLALVVDKSGEPEAANSKDSGDKQLGISGALGGLAGSDPFPKLPKGVDGLLKSNGVLRFNEYIDV.

Positions 1-166 (MKFGKQIQKR…KSKTKELYLS (166 aa)) constitute an SPX domain. ANK repeat units lie at residues 268–298 (RVTR…DIQS), 336–366 (YGRV…TINL), 370–399 (DNFT…RIDP), 403–432 (TDHV…KILA), 435–465 (EGLY…DLDQ), 470–499 (YGWT…DPNI), and 503–532 (KDLP…EKAA). Positions 717 to 1048 (ITDFETYWKA…DPFPKLPKGV (332 aa)) constitute a GP-PDE domain. The disordered stretch occupies residues 923-963 (KQQQQGSCSKGDGDEDMGGTTAASRREAADERTLQSDGRRT). The segment covering 946 to 962 (SRREAADERTLQSDGRR) has biased composition (basic and acidic residues).

In terms of biological role, controls phosphorus acquisition. The chain is Ankyrin repeat protein nuc-2 (nuc-2) from Neurospora crassa (strain ATCC 24698 / 74-OR23-1A / CBS 708.71 / DSM 1257 / FGSC 987).